We begin with the raw amino-acid sequence, 375 residues long: Growth/differentiation factor 8 (375 aa).

A signal peptide spans 1 to 23; it reads MQKLQLCVYIYLFMLIVAGPVDL. A propeptide spanning residues 24–266 is cleaved from the precursor; that stretch reads NENSEQKENV…VTDTPKRSRR (243 aa). The N-linked (GlcNAc...) asparagine glycan is linked to asparagine 71. 4 disulfides stabilise this stretch: cysteine 272-cysteine 282, cysteine 281-cysteine 340, cysteine 309-cysteine 372, and cysteine 313-cysteine 374.

The protein belongs to the TGF-beta family. In terms of assembly, homodimer; disulfide-linked. Interacts with WFIKKN2, leading to inhibit its activity. Interacts with FSTL3. Post-translationally, synthesized as large precursor molecule that undergoes proteolytic cleavage to generate an N-terminal propeptide and a disulfide linked C-terminal dimer, which is the biologically active molecule. The circulating form consists of a latent complex of the C-terminal dimer and other proteins, including its propeptide, which maintain the C-terminal dimer in a latent, inactive state. Ligand activation requires additional cleavage of the prodomain by a tolloid-like metalloproteinase.

It localises to the secreted. Acts specifically as a negative regulator of skeletal muscle growth. The chain is Growth/differentiation factor 8 (MSTN) from Pan paniscus (Pygmy chimpanzee).